We begin with the raw amino-acid sequence, 642 residues long: Threonine--tRNA ligase (642 aa).

The 61-residue stretch at 1-61 (MPVITLPDGS…DTDAQLAIIT (61 aa)) folds into the TGS domain. Positions 243-534 (DHRKIGKQLD…LTEEFAGFFP (292 aa)) are catalytic. Zn(2+) contacts are provided by cysteine 334, histidine 385, and histidine 511.

Belongs to the class-II aminoacyl-tRNA synthetase family. Homodimer. The cofactor is Zn(2+).

It is found in the cytoplasm. The enzyme catalyses tRNA(Thr) + L-threonine + ATP = L-threonyl-tRNA(Thr) + AMP + diphosphate + H(+). Its function is as follows. Catalyzes the attachment of threonine to tRNA(Thr) in a two-step reaction: L-threonine is first activated by ATP to form Thr-AMP and then transferred to the acceptor end of tRNA(Thr). Also edits incorrectly charged L-seryl-tRNA(Thr). This Pectobacterium carotovorum subsp. carotovorum (strain PC1) protein is Threonine--tRNA ligase.